The following is a 98-amino-acid chain: Acylphosphatase (98 aa).

The Acylphosphatase-like domain occupies 12-98; sequence TYYVRVRGVV…DKRFERFQQH (87 aa). Catalysis depends on residues Arg-27 and Asn-45.

The protein belongs to the acylphosphatase family.

It catalyses the reaction an acyl phosphate + H2O = a carboxylate + phosphate + H(+). This Burkholderia thailandensis (strain ATCC 700388 / DSM 13276 / CCUG 48851 / CIP 106301 / E264) protein is Acylphosphatase (acyP).